The sequence spans 1450 residues: Sister chromatid cohesion protein PDS5 homolog (1450 aa).

Disordered regions lie at residues Met-1–Lys-145, Val-680–Gln-707, and Leu-1340–Asn-1450. The segment covering Asp-45–Ser-59 has biased composition (acidic residues). A compositionally biased stretch (low complexity) spans Lys-77–Gln-138. Residues Lys-650 to Glu-716 adopt a coiled-coil conformation. Over residues Gly-682 to Ser-691 the composition is skewed to polar residues. Composition is skewed to low complexity over residues Gln-692–Gln-707 and Asn-1350–Asn-1363. Positions Asp-1369–Asn-1378 are enriched in basic and acidic residues. Residues Asn-1387 to Pro-1401 show a composition bias toward low complexity. The span at Pro-1402–Gln-1427 shows a compositional bias: basic residues. Over residues Ser-1430 to Asn-1450 the composition is skewed to acidic residues.

This sequence belongs to the PDS5 family.

Its subcellular location is the nucleus. May regulate sister chromatid cohesion during mitosis and couple it to DNA replication. This is Sister chromatid cohesion protein PDS5 homolog from Dictyostelium discoideum (Social amoeba).